Consider the following 261-residue polypeptide: Thiamine thiazole synthase (261 aa).

NAD(+)-binding positions include Ser-40, 59–60, Gly-67, Val-133, and 159–161; these read ER and HID. Asp-161 and His-176 together coordinate Fe cation. Residues Ser-179 and Met-226 each coordinate NAD(+). A glycine-binding site is contributed by Arg-236.

The protein belongs to the THI4 family. Homooctamer; tetramer of dimers. Requires Fe(2+) as cofactor.

The enzyme catalyses hydrogen sulfide + glycine + NAD(+) = ADP-5-ethyl-4-methylthiazole-2-carboxylate + nicotinamide + 3 H2O + H(+). It participates in cofactor biosynthesis; thiamine diphosphate biosynthesis. Involved in the biosynthesis of the thiazole moiety of thiamine. Catalyzes the conversion of NAD and glycine to adenosine diphosphate 5-(2-hydroxyethyl)-4-methylthiazole-2-carboxylate (ADT), an adenylated thiazole intermediate, using free sulfide as a source of sulfur. This chain is Thiamine thiazole synthase, found in Methanococcus maripaludis (strain C6 / ATCC BAA-1332).